An 87-amino-acid chain; its full sequence is COMM domain-containing protein 6 (87 aa).

Met1 carries the N-acetylmethionine modification. One can recognise a COMM domain in the interval 20–87 (QLIDFQWKLG…KEIAAVIETV (68 aa)).

This sequence belongs to the COMM domain-containing protein 6 family. In terms of assembly, component of the commander complex consisting of the CCC subcomplex and the retriever subcomplex. Component of the CCC (COMMD/CCDC22/CCDC93) subcomplex consisting of COMMD1, COMMD2, COMMD3, COMMD4, COMMD5, COMMD6, COMMD7, COMMD8, COMMD9, COMMD10, CCDC22 and CCDC93; within the complex forms a heterodimer with COMMD1. May form a homodimer with isoform 1. Interacts with RELA, RELB, NFKB1/p105. Does not interact with NFKBIB. Interacts with CCDC22, CCDC93, SCNN1B, CUL4A.

The protein resides in the nucleus. It is found in the cytoplasm. Functionally, scaffold protein in the commander complex that is essential for endosomal recycling of transmembrane cargos; the commander complex is composed of the CCC subcomplex and the retriever subcomplex. May modulate activity of cullin-RING E3 ubiquitin ligase (CRL) complexes. Down-regulates activation of NF-kappa-B. Inhibits TNF-induced NFKB1 activation. The polypeptide is COMM domain-containing protein 6 (Commd6) (Mus musculus (Mouse)).